A 502-amino-acid polypeptide reads, in one-letter code: Carbon catabolite-derepressing protein kinase (502 aa).

The Protein kinase domain occupies 14–269 (YYLGKILGVG…IGEIRKHSWF (256 aa)). ATP is bound by residues 20 to 28 (LGVGTFAKV) and K43. D140 acts as the Proton acceptor in catalysis. T173 is subject to Phosphothreonine; by autocatalysis. The region spanning 290-330 (MIDEDTLRDVVKLGYDKDHVCESLCNRLQNEETVAYYLLLD) is the UBA domain. The KA1 domain maps to 453–501 (NSRLPAVIKFEIQLYKTKDDKYLLDMQRVTGPQLLFLEFCAAFLTNLRV).

It belongs to the protein kinase superfamily. CAMK Ser/Thr protein kinase family. SNF1 subfamily.

It catalyses the reaction L-seryl-[protein] + ATP = O-phospho-L-seryl-[protein] + ADP + H(+). The catalysed reaction is L-threonyl-[protein] + ATP = O-phospho-L-threonyl-[protein] + ADP + H(+). Functionally, essential for release from glucose repression. The chain is Carbon catabolite-derepressing protein kinase (RKIN1) from Secale cereale (Rye).